A 103-amino-acid chain; its full sequence is Pyrimidine/purine nucleoside phosphorylase (103 aa).

The protein belongs to the nucleoside phosphorylase PpnP family.

It carries out the reaction a purine D-ribonucleoside + phosphate = a purine nucleobase + alpha-D-ribose 1-phosphate. The enzyme catalyses adenosine + phosphate = alpha-D-ribose 1-phosphate + adenine. It catalyses the reaction cytidine + phosphate = cytosine + alpha-D-ribose 1-phosphate. The catalysed reaction is guanosine + phosphate = alpha-D-ribose 1-phosphate + guanine. It carries out the reaction inosine + phosphate = alpha-D-ribose 1-phosphate + hypoxanthine. The enzyme catalyses thymidine + phosphate = 2-deoxy-alpha-D-ribose 1-phosphate + thymine. It catalyses the reaction uridine + phosphate = alpha-D-ribose 1-phosphate + uracil. The catalysed reaction is xanthosine + phosphate = alpha-D-ribose 1-phosphate + xanthine. Its function is as follows. Catalyzes the phosphorolysis of diverse nucleosides, yielding D-ribose 1-phosphate and the respective free bases. Can use uridine, adenosine, guanosine, cytidine, thymidine, inosine and xanthosine as substrates. Also catalyzes the reverse reactions. The chain is Pyrimidine/purine nucleoside phosphorylase from Chlorobium chlorochromatii (strain CaD3).